Reading from the N-terminus, the 123-residue chain is Large ribosomal subunit protein uL14 (123 aa).

Belongs to the universal ribosomal protein uL14 family. Part of the 50S ribosomal subunit. Forms a cluster with proteins L3 and L19. In the 70S ribosome, L14 and L19 interact and together make contacts with the 16S rRNA in bridges B5 and B8.

In terms of biological role, binds to 23S rRNA. Forms part of two intersubunit bridges in the 70S ribosome. This Erwinia tasmaniensis (strain DSM 17950 / CFBP 7177 / CIP 109463 / NCPPB 4357 / Et1/99) protein is Large ribosomal subunit protein uL14.